Consider the following 81-residue polypeptide: Sulfur carrier protein TusA (81 aa).

C19 functions as the Cysteine persulfide intermediate in the catalytic mechanism.

This sequence belongs to the sulfur carrier protein TusA family.

It is found in the cytoplasm. Sulfur carrier protein which probably makes part of a sulfur-relay system. The sequence is that of Sulfur carrier protein TusA from Shewanella putrefaciens (strain CN-32 / ATCC BAA-453).